Here is a 378-residue protein sequence, read N- to C-terminus: H repeat-associated putative transposase YhhI (378 aa).

This sequence belongs to the transposase 11 family.

The polypeptide is H repeat-associated putative transposase YhhI (yhhI) (Escherichia coli (strain K12)).